The following is a 271-amino-acid chain: Mannosyl-3-phosphoglycerate phosphatase (271 aa).

Asp13 (nucleophile) is an active-site residue. Mg(2+) is bound by residues Asp13, Asp15, and Asp214.

This sequence belongs to the HAD-like hydrolase superfamily. MPGP family. Mg(2+) is required as a cofactor.

It localises to the cytoplasm. The catalysed reaction is 2-O-(alpha-D-mannosyl)-3-phosphoglycerate + H2O = (2R)-2-O-(alpha-D-mannosyl)-glycerate + phosphate. This is Mannosyl-3-phosphoglycerate phosphatase from Escherichia coli O81 (strain ED1a).